Consider the following 260-residue polypeptide: Ribosomal RNA small subunit methyltransferase J (260 aa).

Residues 125–126 (ER) and Asp179 each bind S-adenosyl-L-methionine.

The protein belongs to the methyltransferase superfamily. RsmJ family.

It is found in the cytoplasm. The catalysed reaction is guanosine(1516) in 16S rRNA + S-adenosyl-L-methionine = N(2)-methylguanosine(1516) in 16S rRNA + S-adenosyl-L-homocysteine + H(+). Functionally, specifically methylates the guanosine in position 1516 of 16S rRNA. The chain is Ribosomal RNA small subunit methyltransferase J from Pseudomonas fluorescens (strain Pf0-1).